A 256-amino-acid polypeptide reads, in one-letter code: Isoprenyl transferase 1 (256 aa).

Asp-34 is a catalytic residue. Residue Asp-34 coordinates Mg(2+). Substrate is bound by residues 35–38 (GNRR), Trp-39, His-52, and 80–82 (STE). The active-site Proton acceptor is the Asn-83. Residues Arg-86, Arg-205, and 211-213 (RLS) each bind substrate. Glu-224 is a Mg(2+) binding site.

The protein belongs to the UPP synthase family. In terms of assembly, homodimer. It depends on Mg(2+) as a cofactor.

In terms of biological role, catalyzes the condensation of isopentenyl diphosphate (IPP) with allylic pyrophosphates generating different type of terpenoids. This Corynebacterium efficiens (strain DSM 44549 / YS-314 / AJ 12310 / JCM 11189 / NBRC 100395) protein is Isoprenyl transferase 1.